Here is a 71-residue protein sequence, read N- to C-terminus: Disintegrin ussuristatin-2 (71 aa).

Residues 1–71 (EAGEECDCGA…QSADCPRNGF (71 aa)) form the Disintegrin domain. 6 disulfide bridges follow: cysteine 6/cysteine 21, cysteine 8/cysteine 16, cysteine 15/cysteine 38, cysteine 29/cysteine 35, cysteine 34/cysteine 59, and cysteine 47/cysteine 66. Positions 51–53 (KGD) match the Cell attachment site; atypical (KGD) motif.

This sequence belongs to the venom metalloproteinase (M12B) family. P-II subfamily. P-IId sub-subfamily. Homodimer. In terms of tissue distribution, expressed by the venom gland.

It localises to the secreted. Its function is as follows. Suppress platelet aggregation induced by ADP, collagen, thrombin, and epinephrine (IC(50)=170-330 nM). Also dose-dependently inhibits the adhesion of human melanoma cells to fibrinogen but not to fibronectin. This is Disintegrin ussuristatin-2 from Gloydius ussuriensis (Ussuri mamushi).